Reading from the N-terminus, the 83-residue chain is Cytochrome b559 subunit alpha (83 aa).

A helical transmembrane segment spans residues 21 to 35; it reads VIHSITIPSLFIAGW. Residue His-23 participates in heme binding.

Belongs to the PsbE/PsbF family. Heterodimer of an alpha subunit and a beta subunit. PSII is composed of 1 copy each of membrane proteins PsbA, PsbB, PsbC, PsbD, PsbE, PsbF, PsbH, PsbI, PsbJ, PsbK, PsbL, PsbM, PsbT, PsbX, PsbY, PsbZ, Psb30/Ycf12, at least 3 peripheral proteins of the oxygen-evolving complex and a large number of cofactors. It forms dimeric complexes. It depends on heme b as a cofactor.

The protein resides in the plastid. It is found in the chloroplast thylakoid membrane. This b-type cytochrome is tightly associated with the reaction center of photosystem II (PSII). PSII is a light-driven water:plastoquinone oxidoreductase that uses light energy to abstract electrons from H(2)O, generating O(2) and a proton gradient subsequently used for ATP formation. It consists of a core antenna complex that captures photons, and an electron transfer chain that converts photonic excitation into a charge separation. This Ginkgo biloba (Ginkgo) protein is Cytochrome b559 subunit alpha.